The following is a 343-amino-acid chain: UDP-glucuronic acid decarboxylase 6 (343 aa).

Positions 1–22 (MASNSSNGTTTTKPPPMPSPLR) are disordered. Residue alanine 2 is modified to N-acetylalanine. 62–87 (DNYFTGSKDNLKKWIGHPRFELIRHD) is a binding site for NAD(+). Arginine 171 serves as a coordination point for substrate. The active-site Proton acceptor is tyrosine 174. An NAD(+)-binding site is contributed by 174–178 (YDEGK). Asparagine 203 serves as a coordination point for substrate. Arginine 215 is a binding site for NAD(+). Substrate-binding positions include 216–220 (VVSNF), 233–240 (QKPGTQTR), and 300–304 (DPRQR).

This sequence belongs to the NAD(P)-dependent epimerase/dehydratase family. UDP-glucuronic acid decarboxylase subfamily. The cofactor is NAD(+).

It localises to the cytoplasm. The enzyme catalyses UDP-alpha-D-glucuronate + H(+) = UDP-alpha-D-xylose + CO2. The protein operates within nucleotide-sugar biosynthesis; UDP-alpha-D-xylose biosynthesis; UDP-alpha-D-xylose from UDP-alpha-D-glucuronate: step 1/1. Its function is as follows. Catalyzes the NAD-dependent decarboxylation of UDP-glucuronic acid to UDP-xylose. Necessary for the biosynthesis of the core tetrasaccharide in glycosaminoglycan biosynthesis. This is UDP-glucuronic acid decarboxylase 6 (UXS6) from Arabidopsis thaliana (Mouse-ear cress).